Reading from the N-terminus, the 412-residue chain is Argininosuccinate synthase (412 aa).

Residues 24 to 32 (AFSGGLDTS) and Ala50 each bind ATP. L-citrulline-binding residues include Tyr103 and Ser108. Residue Gly132 coordinates ATP. L-aspartate is bound by residues Thr134, Asn138, and Asp139. Asn138 provides a ligand contact to L-citrulline. Arg142 serves as a coordination point for L-citrulline.

The protein belongs to the argininosuccinate synthase family. Type 1 subfamily. As to quaternary structure, homotetramer.

The protein localises to the cytoplasm. The catalysed reaction is L-citrulline + L-aspartate + ATP = 2-(N(omega)-L-arginino)succinate + AMP + diphosphate + H(+). It functions in the pathway amino-acid biosynthesis; L-arginine biosynthesis; L-arginine from L-ornithine and carbamoyl phosphate: step 2/3. The protein is Argininosuccinate synthase of Xanthomonas axonopodis pv. citri (strain 306).